Here is a 327-residue protein sequence, read N- to C-terminus: E3 ubiquitin-protein ligase SINAT4 (327 aa).

Residues 1–27 (METDSMECVSSTGNEIHQNGNGHQSYQ) are disordered. Positions 8-27 (CVSSTGNEIHQNGNGHQSYQ) are enriched in polar residues. An RING-type zinc finger spans residues 64-100 (CPVCTYSMYPPIHQCHNGHTLCSTCKVRVHNRCPTCR). Residues 114 to 307 (VAESLELPCK…KELKLRVTGK (194 aa)) form an SBD region. An SIAH-type zinc finger spans residues 117–177 (SLELPCKFYN…LVAHLRDDHK (61 aa)). Zn(2+) is bound by residues C122, C129, H141, C145, C152, C159, H171, and H176.

It belongs to the SINA (Seven in absentia) family. As to quaternary structure, interacts with SINAT6. Interacts with WAV3. Interacts with FREE1. Interacts with ELC/VPS23A.

It is found in the endosome. The protein localises to the multivesicular body. Its subcellular location is the cytoplasmic vesicle. The protein resides in the autophagosome. It carries out the reaction S-ubiquitinyl-[E2 ubiquitin-conjugating enzyme]-L-cysteine + [acceptor protein]-L-lysine = [E2 ubiquitin-conjugating enzyme]-L-cysteine + N(6)-ubiquitinyl-[acceptor protein]-L-lysine.. It functions in the pathway protein modification; protein ubiquitination. Its function is as follows. E3 ubiquitin-protein ligase that mediates ubiquitination and subsequent proteasomal degradation of target proteins. E3 ubiquitin ligases accept ubiquitin from an E2 ubiquitin-conjugating enzyme in the form of a thioester and then directly transfers the ubiquitin to targeted substrates. It probably triggers the ubiquitin-mediated degradation of different substrates. Modulates directly the ubiquitination and proteasomal-dependent degradation of FREE1, a component of the ESCRT-I complex. Modulates directly the ubiquitination and proteasomal-dependent degradation of ELC/VPS23A, a component of the ESCRT-I complex. The sequence is that of E3 ubiquitin-protein ligase SINAT4 from Arabidopsis thaliana (Mouse-ear cress).